Here is a 556-residue protein sequence, read N- to C-terminus: Formate--tetrahydrofolate ligase (556 aa).

65 to 72 lines the ATP pocket; the sequence is TPAGEGKS.

It belongs to the formate--tetrahydrofolate ligase family.

The catalysed reaction is (6S)-5,6,7,8-tetrahydrofolate + formate + ATP = (6R)-10-formyltetrahydrofolate + ADP + phosphate. It participates in one-carbon metabolism; tetrahydrofolate interconversion. The chain is Formate--tetrahydrofolate ligase from Streptococcus pneumoniae serotype 19F (strain G54).